We begin with the raw amino-acid sequence, 861 residues long: Cone cGMP-specific 3',5'-cyclic phosphodiesterase subunit alpha' (861 aa).

GAF domains lie at Ser75–Leu224 and Asp256–Leu433. 3',5'-cyclic GMP-binding positions include Ser97, Asn116, Asp169–Thr172, and Thr176. Residues Glu486–Tyr819 enclose the PDEase domain. His562 serves as the catalytic Proton donor. 4 residues coordinate a divalent metal cation: His566, His602, Asp603, and Asp723. The segment covering Thr826–Asp839 has biased composition (basic and acidic residues). Positions Thr826–Leu861 are disordered. Cys858 is modified (cysteine methyl ester). Cys858 is lipidated: S-geranylgeranyl cysteine. The propeptide at Leu859–Leu861 is removed in mature form.

Belongs to the cyclic nucleotide phosphodiesterase family. Composed of two alpha' subunits that are associated with 3 smaller proteins of 11, 13, and 15 kDa. The cofactor is a divalent metal cation.

It localises to the cell membrane. The enzyme catalyses 3',5'-cyclic GMP + H2O = GMP + H(+). Functionally, as cone-specific cGMP phosphodiesterase, it plays an essential role in light detection and cone phototransduction by rapidly decreasing intracellular levels of cGMP. The protein is Cone cGMP-specific 3',5'-cyclic phosphodiesterase subunit alpha' (Pde6c) of Mus musculus (Mouse).